Reading from the N-terminus, the 881-residue chain is Sodium/potassium/calcium exchanger Nckx30C (881 aa).

Topologically, residues 1–194 (MLQPTTCSKQ…SRCRSRRCLR (194 aa)) are extracellular. N-linked (GlcNAc...) asparagine glycosylation is present at Asn69. Disordered regions lie at residues 79-111 (DMLS…APSD), 149-181 (AKTR…LLHP), 215-255 (AAKP…TSGE), and 272-315 (GLEE…TTKT). Over residues 85-95 (RSRSSSTTIDF) the composition is skewed to polar residues. Positions 149-175 (AKTRSRTAAQLPATSAASATSSRGASA) are enriched in low complexity. Residues 195-215 (LPIYSILLLCLTTQGLGLGDA) traverse the membrane as a helical segment. The Cytoplasmic portion of the chain corresponds to 216–330 (AKPRPAKQHF…DLFTKEQLEN (115 aa)). The span at 228–240 (SNSNSPNQNQNHN) shows a compositional bias: low complexity. Polar residues predominate over residues 296–315 (AGNQRGINDTHNDNSTTTKT). A helical membrane pass occupies residues 331-351 (GAVILHIIGVIYMFVALAIVC). The Extracellular segment spans residues 352–375 (DEFFVPSLDVIIEKLGITDDVAGA). An Alpha-1 repeat occupies 372–412 (VAGATFMAAGGSAPELFTSVIGVFVSFDDVGIGTIVGSAVF). A helical membrane pass occupies residues 376 to 396 (TFMAAGGSAPELFTSVIGVFV). At 397-402 (SFDDVG) the chain is on the cytoplasmic side. The chain crosses the membrane as a helical span at residues 403–423 (IGTIVGSAVFNILFVIGMCAL). Over 424–433 (FSKTVLSLTW) the chain is Extracellular. A helical membrane pass occupies residues 434-454 (WPLFRDCSFYSISLLVLIYFF). At 455–458 (RDNR) the chain is on the cytoplasmic side. Residues 459 to 479 (IFWWEALILFTIYIGYVAFMK) form a helical membrane-spanning segment. Topologically, residues 480–720 (WNVQVETCVK…PDTRTPRGKR (241 aa)) are extracellular. Residues 508 to 565 (PAGNAANSSETSMATQPGGSVTSRAASETRSGPPGSSNAGATGNSSGGGGTSGSTQTG) are disordered. The segment covering 512–537 (AANSSETSMATQPGGSVTSRAASETR) has biased composition (polar residues). N-linked (GlcNAc...) asparagine glycosylation is found at Asn514 and Asn551. Low complexity predominate over residues 542–551 (GSSNAGATGN). Residues 721 to 741 (FFPVTFIGSIVWIAAFSYLMV) traverse the membrane as a helical segment. Over 742–756 (WWANVAGDTARIPPE) the chain is Cytoplasmic. A helical transmembrane segment spans residues 757-777 (VMGLTFLAAGTSIPDLITSVI). An Alpha-2 repeat occupies 764–795 (AAGTSIPDLITSVIVARKGFGDMAVSSSVGSN). At 778–795 (VARKGFGDMAVSSSVGSN) the chain is on the extracellular side. The helical transmembrane segment at 796-816 (IFDVTVGLPIPWLLYGIIYGA) threads the bilayer. At 817–822 (PVEVNS) the chain is on the cytoplasmic side. A helical transmembrane segment spans residues 823–843 (VGMVCSITILFMMLVFVVMSI). Over 844 to 852 (ACFRWRMNK) the chain is Extracellular. A helical membrane pass occupies residues 853–873 (GLGFTMFLLYFAFVAVSLMFE). Residues 874–881 (YDVITCPF) lie on the Cytoplasmic side of the membrane.

This sequence belongs to the Ca(2+):cation antiporter (CaCA) (TC 2.A.19) family. SLC24A subfamily. In terms of tissue distribution, expressed in the adult nervous system. Expressed in the photoreceptor cells as well as in the lamina, medulla, and optic lobes of the brain.

The protein localises to the membrane. May function in the removal and maintenance of calcium homeostasis during signaling in the adult and in signaling events during embryogenesis and patterning of imaginal disks. Transports one Ca(2+) and 1 K(+) in exchange for 4 Na(+). This Drosophila melanogaster (Fruit fly) protein is Sodium/potassium/calcium exchanger Nckx30C (Nckx30C).